The chain runs to 992 residues: Disks large-associated protein 1 (992 aa).

2 disordered regions span residues 150 to 209 (TKSH…SWWS) and 355 to 376 (KAMG…PKVA). S169 is subject to Phosphoserine. A compositionally biased stretch (low complexity) spans 194 to 209 (RSNASNASPTSPSWWS). A phosphoserine mark is found at S362, S365, S368, S372, S389, S418, S421, S425, S428, S437, S509, S516, and S578. Phosphothreonine is present on T579. S581 and S605 each carry phosphoserine. The residue at position 606 (T606) is a Phosphothreonine. 2 positions are modified to phosphoserine: S608 and S611. 2 interaction with DYL2 regions span residues 665 to 676 (LSIGIQVDDAEE) and 687 to 698 (NKFQSVGVQVEE). Residues 914-980 (WKQMDPLDKK…QNSATESAES (67 aa)) form a disordered region. Composition is skewed to basic and acidic residues over residues 918-927 (DPLDKKERRA) and 943-958 (IRER…EARK). The residue at position 947 (S947) is a Phosphoserine. Residues 969–978 (VRQNSATESA) are compositionally biased toward polar residues. A PDZ-binding motif is present at residues 990-992 (TRL).

Belongs to the SAPAP family. Interacts with the guanylate kinase-like domain of DLG1, DLG2, DLG3, DLG4 and AIP1. Interacts with the PDZ domain of SHANK1, SHANK2 and SHANK3. Found in a complex with DLG4 and SHANK1, SHANK2 or SHANK3. Found in a complex with DLG4 and BEGAIN. Interacts with DYL2 and LRFN1. Interacts with MPP2 (via the SH3-Guanylate kinase-like sub-module). In terms of processing, ubiquitinated by TRIM3; leading to proteasomal degradation. In terms of tissue distribution, highest levels in the neocortex, part of the hippocampus, the granule cell layer of the cerebellum, the glomerular layer of the olfactory bulb, the inner plexiform layer of the retina, the ventral and dorsal horn of the spinal cord, the neuromuscular junction and the submandibular ganglion.

The protein localises to the cell membrane. Its subcellular location is the postsynaptic density. It localises to the synapse. Part of the postsynaptic scaffold in neuronal cells. The sequence is that of Disks large-associated protein 1 (Dlgap1) from Mus musculus (Mouse).